The primary structure comprises 287 residues: tRNA selenocysteine 1-associated protein 1 (287 aa).

RRM domains are found at residues 3-86 (ASLW…YVTY) and 96-175 (YSLF…VAIP).

Belongs to the RRM TRSPAP family. As to quaternary structure, component of the tRNA(Sec) complex composed at least of EEFSEC, SECISBP2, SEPHS1, SEPSECS, TRNAU1AP and tRNA(Sec). Found in a complex with tRNA(Sec). Interacts with SEPSECS. Associates with mRNP and/or polysomes. Found in a complex with EEFSEC, SECISBP2, TRNAU1AP and tRNA(Sec).

It localises to the nucleus. The protein localises to the cytoplasm. Functionally, involved in the early steps of selenocysteine biosynthesis and tRNA(Sec) charging to the later steps resulting in the cotranslational incorporation of selenocysteine into selenoproteins. Stabilizes the SECISBP2, EEFSEC and tRNA(Sec) complex. May be involved in the methylation of tRNA(Sec). Enhances efficiency of selenoproteins synthesis. The polypeptide is tRNA selenocysteine 1-associated protein 1 (TRNAU1AP) (Pongo abelii (Sumatran orangutan)).